Here is a 600-residue protein sequence, read N- to C-terminus: Aspartate--tRNA(Asp/Asn) ligase (600 aa).

Position 187 (Glu187) interacts with L-aspartate. The tract at residues 211 to 214 (QIFK) is aspartate. Positions 233 and 463 each coordinate L-aspartate. Residue 233–235 (RDE) coordinates ATP. Glu497 lines the ATP pocket. Arg504 lines the L-aspartate pocket. 549–552 (GVDR) serves as a coordination point for ATP.

It belongs to the class-II aminoacyl-tRNA synthetase family. Type 1 subfamily. As to quaternary structure, homodimer.

Its subcellular location is the cytoplasm. It carries out the reaction tRNA(Asx) + L-aspartate + ATP = L-aspartyl-tRNA(Asx) + AMP + diphosphate. In terms of biological role, aspartyl-tRNA synthetase with relaxed tRNA specificity since it is able to aspartylate not only its cognate tRNA(Asp) but also tRNA(Asn). Reaction proceeds in two steps: L-aspartate is first activated by ATP to form Asp-AMP and then transferred to the acceptor end of tRNA(Asp/Asn). This Wolbachia sp. subsp. Drosophila simulans (strain wRi) protein is Aspartate--tRNA(Asp/Asn) ligase.